A 251-amino-acid chain; its full sequence is Cell division protein ZapD (251 aa).

Belongs to the ZapD family. In terms of assembly, interacts with FtsZ.

The protein resides in the cytoplasm. Functionally, cell division factor that enhances FtsZ-ring assembly. Directly interacts with FtsZ and promotes bundling of FtsZ protofilaments, with a reduction in FtsZ GTPase activity. This is Cell division protein ZapD from Paraburkholderia phytofirmans (strain DSM 17436 / LMG 22146 / PsJN) (Burkholderia phytofirmans).